We begin with the raw amino-acid sequence, 595 residues long: Merlin (595 aa).

A Phosphoserine modification is found at Ser-13. One can recognise an FERM domain in the interval 22-311; sequence FTVRIVTMDA…GNHDLFMRRR (290 aa). At Ser-518 the chain carries Phosphoserine; by PAK.

In terms of assembly, interacts with NHERF1, HGS and AGAP2. Interacts with LAYN. Interacts with SGSM3. Interacts (via FERM domain) with MPP1. Interacts with WWC1. Interacts with the CUL4A-RBX1-DDB1-VprBP/DCAF1 E3 ubiquitin-protein ligase complex. The unphosphorylated form interacts (via FERM domain) with VPRBP/DCAF1. Interacts (via FERM domain) with NOP53; the interaction is direct. Interacts with SCHIP1; the interaction is direct. Phosphorylation of Ser-518 inhibits nuclear localization by disrupting the intramolecular association of the FERM domain with the C-terminal tail. The dephosphorylation of Ser-518 favors the interaction with NOP53. In terms of processing, ubiquitinated by the CUL4A-RBX1-DDB1-DCAF1/VprBP E3 ubiquitin-protein ligase complex for ubiquitination and subsequent proteasome-dependent degradation. As to expression, widely expressed. Isoform 1 and isoform 3 are predominant. Isoform 4, isoform 5 and isoform 6 are expressed moderately. Isoform 8 is found at low frequency. Isoform 7, isoform 9 and isoform 10 are not expressed in adult tissues, with the exception of adult retina expressing isoform 10. Isoform 9 is faintly expressed in fetal brain, heart, lung, skeletal muscle and spleen. Fetal thymus expresses isoforms 1, 7, 9 and 10 at similar levels.

It localises to the cell projection. The protein localises to the filopodium membrane. It is found in the ruffle membrane. Its subcellular location is the nucleus. The protein resides in the cytoplasm. It localises to the perinuclear region. The protein localises to the cytoplasmic granule. It is found in the cytoskeleton. Its function is as follows. Probable regulator of the Hippo/SWH (Sav/Wts/Hpo) signaling pathway, a signaling pathway that plays a pivotal role in tumor suppression by restricting proliferation and promoting apoptosis. Along with WWC1 can synergistically induce the phosphorylation of LATS1 and LATS2 and can probably function in the regulation of the Hippo/SWH (Sav/Wts/Hpo) signaling pathway. May act as a membrane stabilizing protein. May inhibit PI3 kinase by binding to AGAP2 and impairing its stimulating activity. Suppresses cell proliferation and tumorigenesis by inhibiting the CUL4A-RBX1-DDB1-VprBP/DCAF1 E3 ubiquitin-protein ligase complex. The protein is Merlin (NF2) of Homo sapiens (Human).